The following is a 510-amino-acid chain: NAD(P)H-quinone oxidoreductase subunit 2 B, chloroplastic (510 aa).

13 helical membrane-spanning segments follow: residues leucine 24–leucine 44, tryptophan 59–tryptophan 79, isoleucine 99–isoleucine 119, methionine 124–cysteine 144, isoleucine 150–threonine 170, leucine 184–leucine 204, isoleucine 229–phenylalanine 249, tryptophan 295–isoleucine 315, methionine 323–aspartate 343, tyrosine 354–leucine 374, alanine 395–phenylalanine 415, leucine 418–leucine 438, and methionine 484–isoleucine 504.

The protein belongs to the complex I subunit 2 family. NDH is composed of at least 16 different subunits, 5 of which are encoded in the nucleus.

The protein resides in the plastid. The protein localises to the chloroplast thylakoid membrane. It carries out the reaction a plastoquinone + NADH + (n+1) H(+)(in) = a plastoquinol + NAD(+) + n H(+)(out). It catalyses the reaction a plastoquinone + NADPH + (n+1) H(+)(in) = a plastoquinol + NADP(+) + n H(+)(out). NDH shuttles electrons from NAD(P)H:plastoquinone, via FMN and iron-sulfur (Fe-S) centers, to quinones in the photosynthetic chain and possibly in a chloroplast respiratory chain. The immediate electron acceptor for the enzyme in this species is believed to be plastoquinone. Couples the redox reaction to proton translocation, and thus conserves the redox energy in a proton gradient. The protein is NAD(P)H-quinone oxidoreductase subunit 2 B, chloroplastic of Acorus calamus (Sweet flag).